The following is a 129-amino-acid chain: Small ribosomal subunit protein uS11 (129 aa).

This sequence belongs to the universal ribosomal protein uS11 family. Part of the 30S ribosomal subunit. Interacts with proteins S7 and S18. Binds to IF-3.

Functionally, located on the platform of the 30S subunit, it bridges several disparate RNA helices of the 16S rRNA. Forms part of the Shine-Dalgarno cleft in the 70S ribosome. The chain is Small ribosomal subunit protein uS11 from Rhizorhabdus wittichii (strain DSM 6014 / CCUG 31198 / JCM 15750 / NBRC 105917 / EY 4224 / RW1) (Sphingomonas wittichii).